A 418-amino-acid chain; its full sequence is Putative competence-damage inducible protein (418 aa).

The protein belongs to the CinA family.

The protein is Putative competence-damage inducible protein of Clostridioides difficile (strain 630) (Peptoclostridium difficile).